The sequence spans 693 residues: Phosphoribosylformylglycinamidine synthase subunit PurL (693 aa).

His34 is an active-site residue. Tyr37 and Lys76 together coordinate ATP. Glu78 provides a ligand contact to Mg(2+). Substrate contacts are provided by residues 79–82 and Arg101; that span reads SHNH. Catalysis depends on His80, which acts as the Proton acceptor. Residue Asp102 coordinates Mg(2+). Gln222 contributes to the substrate binding site. Residue Asp248 participates in Mg(2+) binding. Substrate is bound at residue 292–294; sequence ETQ. 2 residues coordinate ATP: Asp470 and Gly507. Residue Ser510 participates in substrate binding.

Belongs to the FGAMS family. As to quaternary structure, monomer. Part of the FGAM synthase complex composed of 1 PurL, 1 PurQ and 2 PurS subunits.

The protein localises to the cytoplasm. It carries out the reaction N(2)-formyl-N(1)-(5-phospho-beta-D-ribosyl)glycinamide + L-glutamine + ATP + H2O = 2-formamido-N(1)-(5-O-phospho-beta-D-ribosyl)acetamidine + L-glutamate + ADP + phosphate + H(+). The protein operates within purine metabolism; IMP biosynthesis via de novo pathway; 5-amino-1-(5-phospho-D-ribosyl)imidazole from N(2)-formyl-N(1)-(5-phospho-D-ribosyl)glycinamide: step 1/2. Its function is as follows. Part of the phosphoribosylformylglycinamidine synthase complex involved in the purines biosynthetic pathway. Catalyzes the ATP-dependent conversion of formylglycinamide ribonucleotide (FGAR) and glutamine to yield formylglycinamidine ribonucleotide (FGAM) and glutamate. The FGAM synthase complex is composed of three subunits. PurQ produces an ammonia molecule by converting glutamine to glutamate. PurL transfers the ammonia molecule to FGAR to form FGAM in an ATP-dependent manner. PurS interacts with PurQ and PurL and is thought to assist in the transfer of the ammonia molecule from PurQ to PurL. In Pyrobaculum calidifontis (strain DSM 21063 / JCM 11548 / VA1), this protein is Phosphoribosylformylglycinamidine synthase subunit PurL.